The chain runs to 593 residues: MATCWQGLWAYRMYLLVFLLPISLLPLPILVPRKEAYCAYAIILMALFWCTDALPLAVTALLPLCLFPMMGIMEASEVGLEYLKDTNVLFIGGLLLAIAVEHWNLHKRIALRVLLLTGVRPALLILGFMVVTAFLSMWISNTASTAMMVPIAHAVLQELNNTQSNVEEGSDNPTFELQEPSPQKETSKVDEKDNGQAQPLPAVPLESGEHMTQEQLRFSQGMSLCVCYSASIGGIATLTGTTPNLVLQGQMTSLFPQNPNVVNFASWFGFAFPIMVILLLLSWLWLQILFLGINFRKNFGIREQEHEQQRKQAAYRVIQTQYRLLGPMSFAEKAVFILFVILVLLWFTREPGFFHGWGNLVFSDASGRVMVSDGSASILIGVFLFMVPSKIPGLTQDPDNPGRLKAPPALLNWKLVNKKMPWNIVLLLGGGYALAKGSEESGLSQWLGNKLMPLQHVPPPATVFIICLLVATFTECTSNAATTTLLLPILASMAQAICLHPLYVMLPCTLASSLAFMLPVATPPNAIVFSFGGLRVSDMARAGIMLNIIGVLVIMLAINSWGVPMFQLHTFPSWAHSNSTTHCLASPPTAPSP.

4 helical membrane-spanning segments follow: residues 11-31 (YRMY…PILV), 53-73 (ALPL…MGIM), 86-106 (TNVL…WNLH), and 121-141 (PALL…WISN). Polar residues predominate over residues 164 to 184 (SNVEEGSDNPTFELQEPSPQK). Positions 164 to 204 (SNVEEGSDNPTFELQEPSPQKETSKVDEKDNGQAQPLPAVP) are disordered. The span at 185 to 194 (ETSKVDEKDN) shows a compositional bias: basic and acidic residues. The next 8 helical transmembrane spans lie at 221 to 241 (GMSL…LTGT), 270 to 290 (FAFP…QILF), 327 to 347 (PMSF…LLWF), 369 to 389 (VMVS…MVPS), 451 to 471 (LMPL…LLVA), 485 to 505 (LLLP…LYVM), 514 to 534 (LAFM…FGGL), and 543 to 563 (GIML…SWGV).

It belongs to the SLC13A/DASS transporter (TC 2.A.47) family. NADC subfamily. As to expression, abundant in kidney and small intestine.

The protein localises to the apical cell membrane. The enzyme catalyses succinate(out) + 3 Na(+)(out) = succinate(in) + 3 Na(+)(in). It carries out the reaction fumarate(out) + 3 Na(+)(out) = fumarate(in) + 3 Na(+)(in). The catalysed reaction is 2-oxoglutarate(out) + 3 Na(+)(out) = 2-oxoglutarate(in) + 3 Na(+)(in). With respect to regulation, li(+) decreases succinate transport in the presence of Na(+), by competing at one of the three cation binding sites. Low-affinity sodium-dicarboxylate cotransporter, that mediates the entry of citric acid cycle intermediates, such as succinate, citrate, fumarate and alpha-ketoglutarate (2-oxoglutarate) into the small intestine and renal proximal tubule. Transports the dicarboxylate into the cell with a probable stoichiometry of 3 Na(+) for 1 divalent dicarboxylate, rendering the process electrogenic. Citrate is transported in protonated form as a divalent anion, rather than the trivalent form which is normally found in blood. Has a critical role in renal dicarboxylate transport. This is Solute carrier family 13 member 2 (SLC13A2) from Oryctolagus cuniculus (Rabbit).